The chain runs to 564 residues: Forkhead transcription factor HCM1 (564 aa).

The segment at 33-80 (DEKEMITPPSSTVRKTMKEVNKRPSHPLSPDHSSPIAPSKAKRQRSDT) is disordered. Residues 58–67 (HPLSPDHSSP) are compositionally biased toward low complexity. Positions 108–199 (KKPPYSYATL…KFFKGENRGY (92 aa)) form a DNA-binding region, fork-head. The segment covering 224 to 241 (QVESGEGNDDLPDEEERE) has biased composition (acidic residues). The interval 224 to 246 (QVESGEGNDDLPDEEEREEAGKF) is disordered. T342 is subject to Phosphothreonine. The segment at 401–448 (SKPQSQQSYSNSQLPPPPSSHGSDLLKTPKMRHSDGLEKTPSRLISTP) is disordered. Over residues 402–413 (KPQSQQSYSNSQ) the composition is skewed to polar residues. Basic and acidic residues predominate over residues 432–441 (RHSDGLEKTP). S496 carries the phosphoserine modification. Residues 536–564 (SDGNNTTDSNQKHHPYHNHPSNDSGNEKN) form a disordered region. Residues 554–564 (HPSNDSGNEKN) show a composition bias toward polar residues.

Phosphorylated by CDK1.

The protein resides in the cytoplasm. The protein localises to the nucleus. Functionally, transcription factor regulating the cell cycle specific transcription of a spindle pole body (SPB) calmodulin binding protein SPC110. Required for full induction of SPC110 transcription in late G1. Binds to DNA consensus sequence 5'-[AT]AA[TC]AAACAA[AT]-3'. Dosage dependent suppressor of calmodulin mutants which have specific defects in SPB assembly. The polypeptide is Forkhead transcription factor HCM1 (HCM1) (Saccharomyces cerevisiae (strain ATCC 204508 / S288c) (Baker's yeast)).